The sequence spans 570 residues: AT-rich interactive domain-containing protein 3A (570 aa).

Residues 102–215 (AGVPNSSSGH…LAPQAQSQHH (114 aa)) form a disordered region. A compositionally biased stretch (acidic residues) spans 120-160 (DIDDEDDEDDDPELDRGMDDEERDMDEDDSMNEGGGDEDLE). The residue at position 179 (serine 179) is a Phosphoserine. One can recognise an ARID domain in the interval 232–324 (DEKRKEFLDD…YLYPYECEKR (93 aa)). Serine 356 is modified (phosphoserine). The REKLES domain occupies 429–523 (AALEQLREKL…GVLFARKPAI (95 aa)). Residues 430–473 (ALEQLREKLESGEPPEKKVMLMAEEQQRIMQHALQQNLFAMATQ) are important for nuclear localization. Positions 475 to 495 (PMNIKLNNRDDRQETALNLST) are homodimerization. The important for cytoplasmic localization stretch occupies residues 519-531 (RKPAIGFMPSSQR). The interval 528-570 (SSQRVHHQHSSQGKSNSPGLSSHIQPSSSASSSASSHGPATSP) is disordered. Phosphoserine occurs at positions 542 and 569. Over residues 548-570 (SSHIQPSSSASSSASSHGPATSP) the composition is skewed to low complexity.

Homodimer.

The protein resides in the nucleus. It localises to the cytoplasm. Transcription factor. The polypeptide is AT-rich interactive domain-containing protein 3A (arid3a) (Danio rerio (Zebrafish)).